A 1458-amino-acid polypeptide reads, in one-letter code: ATPase family AAA domain-containing protein 2B (1458 aa).

Residues 1–155 form a disordered region; that stretch reads MVNTRKSSLR…LRGEKKGDGD (155 aa). Phosphoserine is present on Ser16. Residues 23–33 are compositionally biased toward gly residues; that stretch reads PGAGAEPGATG. Residues 34-58 are compositionally biased toward low complexity; the sequence is GSSHFISSRTRSSKTRAASCPAAKA. Ser79, Ser81, and Ser86 each carry phosphoserine. Residues 99–115 show a composition bias toward basic and acidic residues; the sequence is VCKDKSKSRSTGQREEW. Positions 116–129 are enriched in polar residues; the sequence is NLSTGQARLTSQPG. The residue at position 140 (Ser140) is a Phosphoserine. Thr221 is subject to Phosphothreonine. Positions 244–286 are disordered; it reads NSYGIQNHHEVSTEGEEEESQEEDGDIEVEEAEGEENDRPYNL. The span at 256–279 shows a compositional bias: acidic residues; sequence TEGEEEESQEEDGDIEVEEAEGEE. Position 318 is a phosphoserine (Ser318). A compositionally biased stretch (basic residues) spans 321-332; the sequence is RRSHIRRKKHAI. A disordered region spans residues 321–353; the sequence is RRSHIRRKKHAIHSSDTTSSDEERFERRKSKSM. Position 441 to 448 (441 to 448) interacts with ATP; that stretch reads GPPGTGKT. Residue Ser939 is modified to Phosphoserine. Residues 943–974 are a coiled coil; it reads QLSESEKSRMEDQEENTLRELRLFLRDVTKRL. The 116-residue stretch at 951 to 1066 folds into the Bromo domain; the sequence is RMEDQEENTL…DTAHAIIAAE (116 aa). 3 disordered regions span residues 1189–1208, 1217–1257, and 1309–1330; these read DCHE…NDES, QGQR…EQTS, and LLED…DDLE. The segment covering 1240–1252 has biased composition (low complexity); the sequence is NESLLVNSSSSLN. Phosphoserine occurs at positions 1338 and 1347.

The protein belongs to the AAA ATPase family. Binds acetylated lysine residues in histone H1.4, H2A, H2B, H3 and H4 (in vitro).

The protein resides in the nucleus. This Homo sapiens (Human) protein is ATPase family AAA domain-containing protein 2B (ATAD2B).